An 859-amino-acid polypeptide reads, in one-letter code: DNA mismatch repair protein MutS (859 aa).

Residue 622–629 (GPNMGGKS) participates in ATP binding.

It belongs to the DNA mismatch repair MutS family.

Functionally, this protein is involved in the repair of mismatches in DNA. It is possible that it carries out the mismatch recognition step. This protein has a weak ATPase activity. This Coxiella burnetii (strain Dugway 5J108-111) protein is DNA mismatch repair protein MutS.